The sequence spans 64 residues: Large ribosomal subunit protein bL35 (64 aa).

This sequence belongs to the bacterial ribosomal protein bL35 family.

In Desulforudis audaxviator (strain MP104C), this protein is Large ribosomal subunit protein bL35.